A 1011-amino-acid polypeptide reads, in one-letter code: Poly [ADP-ribose] polymerase 1 (1011 aa).

2 consecutive PARP-type zinc fingers follow at residues 9 to 91 (YRAE…ETGA) and 113 to 203 (FAAE…PATK). Zn(2+)-binding residues include cysteine 21, cysteine 24, histidine 53, cysteine 56, cysteine 125, cysteine 128, histidine 159, and cysteine 162. Positions 198–235 (QLPATKTEGKRKGEEVDGNVVAKKKSRKEKEKESKQEK) are disordered. Short sequence motifs (nuclear localization signal) lie at residues 207 to 209 (KRK) and 220 to 225 (KKKSRK). Residues 224 to 358 (RKEKEKESKQ…CKKQDRIFPP (135 aa)) enclose the PADR1 zinc-binding domain. The segment covering 225 to 235 (KEKEKESKQEK) has biased composition (basic and acidic residues). The zinc ribbon stretch occupies residues 289-331 (GALLPCEECKGQFVFKSDAYYCSGDITAWTKCVAKTQTPNRKD). Residues cysteine 294, cysteine 297, cysteine 310, and cysteine 320 each contribute to the Zn(2+) site. The segment at 359-378 (EAATVNSAPPPPASAPLTET) is disordered. The automodification domain stretch occupies residues 371–522 (ASAPLTETVT…PSKSEKKMKL (152 aa)). The BRCT domain occupies 382-473 (PQDKPLTNMK…KGFQELLSLH (92 aa)). 17 positions are modified to polyADP-ribosyl glutamic acid: glutamate 403, glutamate 404, glutamate 410, glutamate 411, glutamate 432, glutamate 434, glutamate 441, glutamate 442, glutamate 453, glutamate 454, glutamate 468, glutamate 481, glutamate 485, glutamate 488, glutamate 509, glutamate 510, and glutamate 517. The tract at residues 496–519 (SKPANMKSAGKVKEEQGPSKSEKK) is disordered. Over residues 506–519 (KVKEEQGPSKSEKK) the composition is skewed to basic and acidic residues. A WGR domain is found at 539-635 (SAHVFEKGGK…KNFTKYPKKF (97 aa)). The 118-residue stretch at 659–776 (KSKLAKPIQD…DIEVAYSLLR (118 aa)) folds into the PARP alpha-helical domain. The PARP catalytic domain maps to 785 to 1011 (DPIDINYEKL…LKFNYKTSLW (227 aa)). NAD(+)-binding positions include 859-861 (HGS), glycine 868, arginine 875, and serine 901. Catalysis depends on glutamate 985, which acts as the For poly [ADP-ribose] polymerase activity.

This sequence belongs to the ARTD/PARP family. As to quaternary structure, homodimer; PARP-type zinc-fingers from separate parp1 molecules form a dimer module that specifically recognizes DNA strand breaks. In terms of processing, poly-ADP-ribosylated on serine, glutamate and aspartate residues by autocatalysis. Auto-ADP-ribosylation on serine takes place following interaction with HPF1. Auto poly-ADP-ribosylation on serine residues promotes its dissociation from chromatin.

The protein localises to the chromosome. It localises to the nucleus. Its subcellular location is the nucleolus. It is found in the cytoplasm. The protein resides in the cytosol. The enzyme catalyses NAD(+) + (ADP-D-ribosyl)n-acceptor = nicotinamide + (ADP-D-ribosyl)n+1-acceptor + H(+).. It carries out the reaction L-seryl-[protein] + NAD(+) = O-(ADP-D-ribosyl)-L-seryl-[protein] + nicotinamide + H(+). It catalyses the reaction L-aspartyl-[protein] + NAD(+) = 4-O-(ADP-D-ribosyl)-L-aspartyl-[protein] + nicotinamide. The catalysed reaction is L-glutamyl-[protein] + NAD(+) = 5-O-(ADP-D-ribosyl)-L-glutamyl-[protein] + nicotinamide. The enzyme catalyses L-tyrosyl-[protein] + NAD(+) = O-(ADP-D-ribosyl)-L-tyrosyl-[protein] + nicotinamide + H(+). It carries out the reaction L-histidyl-[protein] + NAD(+) = N(tele)-(ADP-D-ribosyl)-L-histidyl-[protein] + nicotinamide + H(+). Its activity is regulated as follows. ADP-ribosyltransferase activity is regulated via an allosteric activation mechanism. In absence of activation signal, parp1 is autoinhibited by the PARP alpha-helical domain (also named HD region), which prevents effective NAD(+)-binding. Activity is highly stimulated by signals, such as DNA strand breaks. Binding to damaged DNA unfolds the PARP alpha-helical domain, relieving autoinhibition. Poly-ADP-ribosyltransferase activity is tightly regulated and parp1 is removed from damaged chromatin following initial poly-ADP-ribosylation of chromatin to avoid prolonged residence (trapping) that has cytotoxic consequences. A number of factors or post-translational modifications (auto-poly-ADP-ribosylation) promote parp1 removal from chromatin. Functionally, poly-ADP-ribosyltransferase that mediates poly-ADP-ribosylation of proteins and plays a key role in DNA repair. Mediates glutamate, aspartate, serine, histidine or tyrosine ADP-ribosylation of proteins: the ADP-D-ribosyl group of NAD(+) is transferred to the acceptor carboxyl group of target residues and further ADP-ribosyl groups are transferred to the 2'-position of the terminal adenosine moiety, building up a polymer with an average chain length of 20-30 units. Serine ADP-ribosylation of proteins constitutes the primary form of ADP-ribosylation of proteins in response to DNA damage. Specificity for the different amino acids is conferred by interacting factors, such as hpf1 and nmnat1. Following interaction with hpf1, catalyzes serine ADP-ribosylation of target proteins; hpf1 confers serine specificity by completing the parp1 active site. Also catalyzes tyrosine ADP-ribosylation of target proteins following interaction with hpf1. Following interaction with nmnat1, catalyzes glutamate and aspartate ADP-ribosylation of target proteins; nmnat1 confers glutamate and aspartate specificity. Parp1 initiates the repair of DNA breaks: recognizes and binds DNA breaks within chromatin and recruits hpf1, licensing serine ADP-ribosylation of target proteins, such as histones (H2BS6ADPr and H3S10ADPr), thereby promoting decompaction of chromatin and the recruitment of repair factors leading to the reparation of DNA strand breaks. In addition to base excision repair (BER) pathway, also involved in double-strand breaks (DSBs) repair. Mediates the poly-ADP-ribosylation of a number of proteins. In addition to proteins, also able to ADP-ribosylate DNA: catalyzes ADP-ribosylation of DNA strand break termini containing terminal phosphates and a 2'-OH group in single- and double-stranded DNA, respectively. Parp1-mediated DNA repair in neurons plays a role in sleep: senses DNA damage in neurons and promotes sleep, facilitating efficient DNA repair. In addition to DNA repair, also involved in other processes, such as transcription regulation, programmed cell death, membrane repair, adipogenesis and innate immunity. Acts as a repressor of transcription: binds to nucleosomes and modulates chromatin structure in a manner similar to histone H1, thereby altering RNA polymerase II. Acts both as a positive and negative regulator of transcription elongation, depending on the context. Poly-ADP-ribose chains generated by parp1 also play a role in poly-ADP-ribose-dependent cell death, a process named parthanatos. Also acts as a negative regulator of the cGAS-STING pathway by mediating poly-ADP-ribosylation and inactivation of cgas. Acts as a negative regulator of adipogenesis by catalyzing poly ADP-ribosylation of histone H2B on 'Glu-35' (H2BE35ADPr). This is Poly [ADP-ribose] polymerase 1 (PARP1) from Gallus gallus (Chicken).